A 919-amino-acid chain; its full sequence is Isoleucine--tRNA ligase (919 aa).

The 'HIGH' region motif lies at 57-67; it reads PYANGNIHIGH. Position 569 (Glu569) interacts with L-isoleucyl-5'-AMP. A 'KMSKS' region motif is present at residues 610–614; sequence KMSKS. Lys613 contributes to the ATP binding site. Zn(2+) contacts are provided by Cys896, Cys899, Cys911, and Cys914.

The protein belongs to the class-I aminoacyl-tRNA synthetase family. IleS type 1 subfamily. In terms of assembly, monomer. Zn(2+) is required as a cofactor.

Its subcellular location is the cytoplasm. The catalysed reaction is tRNA(Ile) + L-isoleucine + ATP = L-isoleucyl-tRNA(Ile) + AMP + diphosphate. Catalyzes the attachment of isoleucine to tRNA(Ile). As IleRS can inadvertently accommodate and process structurally similar amino acids such as valine, to avoid such errors it has two additional distinct tRNA(Ile)-dependent editing activities. One activity is designated as 'pretransfer' editing and involves the hydrolysis of activated Val-AMP. The other activity is designated 'posttransfer' editing and involves deacylation of mischarged Val-tRNA(Ile). This Aliarcobacter butzleri (strain RM4018) (Arcobacter butzleri) protein is Isoleucine--tRNA ligase.